The following is a 595-amino-acid chain: Tripeptidyl-peptidase SED3 (595 aa).

A signal peptide spans 1 to 22 (MLLPWQQTIIILFLGVNSLVAA). The propeptide at 23–201 (LRNTYRTVEE…KLETIQLSSN (179 aa)) is removed in mature form. N-linked (GlcNAc...) asparagine glycans are attached at residues N207, N264, and N278. One can recognise a Peptidase S53 domain in the interval 209–595 (TITPQCLRDI…EILAKIVRDL (387 aa)). Residues E285 and D289 each act as charge relay system in the active site. N-linked (GlcNAc...) asparagine glycosylation is found at N298 and N365. S499 functions as the Charge relay system in the catalytic mechanism. D541 and I542 together coordinate Ca(2+). N-linked (GlcNAc...) asparagine glycosylation is found at N554, N557, and N569. 2 residues coordinate Ca(2+): G573 and D575.

The cofactor is Ca(2+).

It is found in the secreted. The protein resides in the extracellular space. It carries out the reaction Release of an N-terminal tripeptide from a polypeptide.. Its function is as follows. Secreted tripeptidyl-peptidase which degrades proteins at acidic pHs and is involved in virulence. This chain is Tripeptidyl-peptidase SED3 (SED3), found in Arthroderma otae (strain ATCC MYA-4605 / CBS 113480) (Microsporum canis).